We begin with the raw amino-acid sequence, 463 residues long: NF-kappa-B-activating protein (463 aa).

Positions 1–14 are enriched in basic residues; sequence MRSRSRSRSRQRER. Residues 1–358 are disordered; sequence MRSRSRSRSR…GGSLNQKDFG (358 aa). 2 stretches are compositionally biased toward basic and acidic residues: residues 15–29 and 39–71; these read RRSDSRARSRSERRT and VSRERKRERDRELHRERTSNRSSRRSREKDAVP. Over residues 78-98 the composition is skewed to low complexity; it reads SSPSRSSSSSSSDRSSSSRSP. The span at 107 to 125 shows a compositional bias: basic and acidic residues; the sequence is KSVERWPNDRYHENNDRRQ. Residues Ser136, Ser189, and Ser191 each carry the phosphoserine modification. Phosphothreonine is present on Thr195. The segment covering 208–238 has biased composition (basic residues); the sequence is PKKKKKKGKRKHKKSEKKSKKKSKKSKKKKS. Residues 241–267 show a composition bias toward low complexity; sequence ESSSSSSSSSSEDSSDESSSSSSSSSS. Over residues 268–278 the composition is skewed to acidic residues; it reads DSEDESEEEDV. A compositionally biased stretch (basic and acidic residues) spans 279–288; sequence WLEKTADGIK. Basic residues predominate over residues 289 to 312; sequence KPKKKKSSTSKKDKKSKKKKKKRK. The span at 330–340 shows a compositional bias: basic and acidic residues; sequence KNKESASHNDE.

This sequence belongs to the NKAP family.

It localises to the nucleus. In terms of biological role, tumor suppressor involved in maintaining genome integrity. Influences gene expression and mRNA splicing. This Drosophila melanogaster (Fruit fly) protein is NF-kappa-B-activating protein.